A 297-amino-acid chain; its full sequence is Homoserine kinase (297 aa).

Residue 82-92 (PLTRGLGSSAS) coordinates ATP.

This sequence belongs to the GHMP kinase family. Homoserine kinase subfamily.

The protein resides in the cytoplasm. It catalyses the reaction L-homoserine + ATP = O-phospho-L-homoserine + ADP + H(+). It functions in the pathway amino-acid biosynthesis; L-threonine biosynthesis; L-threonine from L-aspartate: step 4/5. In terms of biological role, catalyzes the ATP-dependent phosphorylation of L-homoserine to L-homoserine phosphate. The sequence is that of Homoserine kinase from Bacillus anthracis (strain CDC 684 / NRRL 3495).